A 430-amino-acid polypeptide reads, in one-letter code: MIDKVYCADVKPEMEGKRVKLAGWVYRKREVGKKVFIVLRDSSGIVQVVFSKELNEEAYREAKKLGIESSVIIEGTVKADPRAPTGAEVQADKLQVIQNVDFFPITKDASPEFLLDVRHLHLRSPKVASIMKVKGTLMQAAREWLLQDGWYEVFPPILVTGAVEGGSTLFKLKYFDKTAYLSQSAQLYLEAAIFGLEKVWSLTPSFRAEKSRTRRHLTEFWHLELEAAWMDLWDIMKVEEELVSYMVQRTLELRRSEIETFRKDLTTLKNAVPPFPRISYDEAIDILQSKGVEIEWGEDMGADEERVLTEEFEAPFFVYGYPKHIKAFYMKEDPEDPRKVLAADMLAPEGYGEIIGGSQREDNYDKLIQRILEEGMDPKDYEWYLDLRKYGSVPHSGFGLGLERLVAWVLKLDHVRWATLFPRTPSRLYP.

It belongs to the class-II aminoacyl-tRNA synthetase family.

The protein localises to the cytoplasm. The catalysed reaction is tRNA(Asn) + L-asparagine + ATP = L-asparaginyl-tRNA(Asn) + AMP + diphosphate + H(+). The polypeptide is Asparagine--tRNA ligase (Thermococcus gammatolerans (strain DSM 15229 / JCM 11827 / EJ3)).